The sequence spans 1648 residues: Putative 1-phosphatidylinositol-3-phosphate 5-kinase FAB1C (1648 aa).

The span at 97 to 106 shows a compositional bias: basic and acidic residues; it reads YDKVHPRDSP. Disordered stretches follow at residues 97–116, 241–276, 721–746, and 1083–1139; these read YDKV…ATES, QEDH…NDDA, SEIP…ENQL, and KTGD…GTSL. A compositionally biased stretch (basic and acidic residues) spans 1084 to 1130; the sequence is TGDDNAPRNPEMHDPPKIDRRMQEGSDERDEQSHTDSEANGDNKDPE. Residues 1316-1639 enclose the PIPK domain; it reads NLNNRESEPS…RFRKAMTTYF (324 aa).

As to quaternary structure, component of the PI(3,5)P2 regulatory complex at least composed of ATG18, SAC/FIG4, FAB1 and VAC14. It depends on Mg(2+) as a cofactor. Requires Mn(2+) as cofactor.

The enzyme catalyses a 1,2-diacyl-sn-glycero-3-phospho-(1D-myo-inositol-3-phosphate) + ATP = a 1,2-diacyl-sn-glycero-3-phospho-(1D-myo-inositol-3,5-bisphosphate) + ADP + H(+). In terms of biological role, the PI(3,5)P2 regulatory complex regulates both the synthesis and turnover of phosphatidylinositol 3,5-bisphosphate (PtdIns(3,5)P2). Catalyzes the phosphorylation of phosphatidylinositol 3-phosphate on the fifth hydroxyl of the myo-inositol ring, to form phosphatidylinositol 3,5-bisphosphate. The sequence is that of Putative 1-phosphatidylinositol-3-phosphate 5-kinase FAB1C (FAB1C) from Arabidopsis thaliana (Mouse-ear cress).